Consider the following 325-residue polypeptide: Glutarate 2-hydroxylase (325 aa).

Positions 160, 162, and 292 each coordinate Fe cation.

The protein belongs to the glutarate hydroxylase family. In terms of assembly, homotetramer. Fe(2+) is required as a cofactor.

The catalysed reaction is glutarate + 2-oxoglutarate + O2 = (S)-2-hydroxyglutarate + succinate + CO2. It participates in amino-acid degradation. Functionally, acts as an alpha-ketoglutarate-dependent dioxygenase catalyzing hydroxylation of glutarate (GA) to L-2-hydroxyglutarate (L2HG). Functions in a L-lysine degradation pathway that proceeds via cadaverine, glutarate and L-2-hydroxyglutarate. The sequence is that of Glutarate 2-hydroxylase from Pseudomonas putida (strain ATCC 700007 / DSM 6899 / JCM 31910 / BCRC 17059 / LMG 24140 / F1).